Reading from the N-terminus, the 218-residue chain is Vacuolar protein-sorting-associated protein 37 homolog 2 (218 aa).

The disordered stretch occupies residues Met1 to Ser51. A compositionally biased stretch (polar residues) spans Lys8 to Pro17. Low complexity predominate over residues Ser28–Pro40. Positions Gln137 to Gly218 constitute a VPS37 C-terminal domain.

This sequence belongs to the VPS37 family. In terms of assembly, component of the endosomal sorting required for transport complex I (ESCRT-I), composed of ELC, VPS28 and VPS37. Interacts with ELC.

The protein resides in the endosome. Functionally, component of the ESCRT-I complex (endosomal sorting complex required for transport I), a regulator of vesicular trafficking process. Required for the sorting of endocytic ubiquitinated cargos into multivesicular bodies (MVBs). This chain is Vacuolar protein-sorting-associated protein 37 homolog 2 (VPS37-2), found in Arabidopsis thaliana (Mouse-ear cress).